The chain runs to 104 residues: Thioredoxin (104 aa).

The 103-residue stretch at 2–104 folds into the Thioredoxin domain; it reads AIVKVTDADF…NLAEVLDKHL (103 aa). The cysteines at positions 29 and 32 are disulfide-linked.

The protein belongs to the thioredoxin family.

Component of the thioredoxin-thioredoxin reductase system. Participates in various redox reactions through the reversible oxidation of its active center dithiol to a disulfide and catalyzes dithiol-disulfide exchange reactions. The sequence is that of Thioredoxin (trxA) from Staphylococcus aureus (strain N315).